The chain runs to 725 residues: Methionine--tRNA ligase (725 aa).

The short motif at 27–37 (PYANGQIHIGH) is the 'HIGH' region element. Positions 158, 161, 171, and 174 each coordinate Zn(2+). Residues 348–352 (KMSKS) carry the 'KMSKS' region motif. Lys351 is an ATP binding site. The tRNA-binding domain occupies 619 to 725 (DFAKIDLRIA…SGAKPGMRVK (107 aa)).

The protein belongs to the class-I aminoacyl-tRNA synthetase family. MetG type 1 subfamily. Homodimer. Zn(2+) serves as cofactor.

The protein resides in the cytoplasm. The enzyme catalyses tRNA(Met) + L-methionine + ATP = L-methionyl-tRNA(Met) + AMP + diphosphate. Its function is as follows. Is required not only for elongation of protein synthesis but also for the initiation of all mRNA translation through initiator tRNA(fMet) aminoacylation. The protein is Methionine--tRNA ligase of Burkholderia pseudomallei (strain 1106a).